The sequence spans 147 residues: Protein SOB FIVE-LIKE 2 (147 aa).

The short motif at 18 to 23 (SGWTMY) is the SOFL-A element. Residues 32–147 (HHSEVVYEEE…ASRVKVSKTK (116 aa)) form a disordered region. A compositionally biased stretch (acidic residues) spans 37 to 77 (VYEEEDDGFSVKEVDDDGDGDEDDDDDDDDDSSNNESDDSM). The SOFL-B signature appears at 76 to 85 (SMTSDASSWP). The span at 78 to 93 (TSDASSWPSTHQPPRS) shows a compositional bias: polar residues. Positions 96 to 106 (NHAAAKNSNAK) are enriched in low complexity. Positions 114–131 (NRVRDRFSDEGEESELKA) are enriched in basic and acidic residues.

Belongs to the SOFL plant protein family. In terms of tissue distribution, predominantly expressed in the vascular tissues of seedlings, developing leaves, flowers and siliques, but barely detectable in roots and stems.

It localises to the cytoplasm. Its subcellular location is the nucleus. Involved in cytokinin-mediated development. Together with SOFL2, triggers the endogenous content of specific bioactive cytokinins derived from the biosynthetic intermediates trans-zeatin riboside monophosphate (tZRMP) and N(6)-(Delta(2)-isopentenyl)adenosine monophosphate (iPRMP) such as N-glucosides trans-zeatin 7-glucoside (tZ7G), cis-zeatin 7-glucoside (cZ7G) and N(6)-(Delta(2)-isopentenyl)adenine 7-glucoside (iP7G). The protein is Protein SOB FIVE-LIKE 2 of Arabidopsis thaliana (Mouse-ear cress).